The chain runs to 134 residues: Probable 4-amino-4-deoxy-L-arabinose-phosphoundecaprenol flippase subunit ArnF (134 aa).

At 1–5 the chain is on the cytoplasmic side; the sequence is MNRRR. The helical transmembrane segment at 6–26 threads the bilayer; the sequence is GILFALASVLLVSVAQLSMRW. At 27-45 the chain is on the periplasmic side; sequence SMTRLPRPDQWLSVPSVDS. The helical transmembrane segment at 46-66 threads the bilayer; the sequence is VALAVVLAAIFAYALSMLCWL. Over 67–77 the chain is Cytoplasmic; that stretch reads AALRDLPLGRA. Residues 78 to 98 traverse the membrane as a helical segment; the sequence is YSLLSISYALVYLLAASLPLF. The Periplasmic segment spans residues 99-101; it reads NES. A helical membrane pass occupies residues 102-122; that stretch reads FSFSKSLGVALVMLGVITINT. Topologically, residues 123-134 are cytoplasmic; the sequence is RPARAPELRSSP.

This sequence belongs to the ArnF family. As to quaternary structure, heterodimer of ArnE and ArnF.

It localises to the cell inner membrane. The protein operates within bacterial outer membrane biogenesis; lipopolysaccharide biosynthesis. Its function is as follows. Translocates 4-amino-4-deoxy-L-arabinose-phosphoundecaprenol (alpha-L-Ara4N-phosphoundecaprenol) from the cytoplasmic to the periplasmic side of the inner membrane. This is Probable 4-amino-4-deoxy-L-arabinose-phosphoundecaprenol flippase subunit ArnF from Pseudomonas fluorescens (strain Pf0-1).